We begin with the raw amino-acid sequence, 1841 residues long: Sodium channel protein type 4 subunit alpha (1841 aa).

The Cytoplasmic portion of the chain corresponds to 1–131 (MASSSLPTLV…RVAIKVLIHA (131 aa)). Basic and acidic residues predominate over residues 32-60 (AMEEEARLQRNKQMEIEEPERKPRSDLEA). The interval 32–63 (AMEEEARLQRNKQMEIEEPERKPRSDLEAGKN) is disordered. Residues 113–448 (MLSPFSIVRR…VVAMAYAEQN (336 aa)) form an I repeat. A helical membrane pass occupies residues 132 to 150 (LFSMFIMITILTNCVFMTM). At 151 to 157 (SNPPSWS) the chain is on the extracellular side. The chain crosses the membrane as a helical span at residues 158–178 (KDVEYTFTGIYTFESLIKMLA). The Cytoplasmic segment spans residues 179 to 192 (RGFCIDDFTFLRDP). Residues 193-210 (WNWLDFSVITMAYVTEFV) form a helical membrane-spanning segment. The Extracellular segment spans residues 211–216 (DLGNIS). N214 is a glycosylation site (N-linked (GlcNAc...) asparagine). The chain crosses the membrane as a helical span at residues 217–233 (ALRTFRVLRALKTITVI). Over 234-252 (PGLKTIVGALIQSVKKLSD) the chain is Cytoplasmic. A helical membrane pass occupies residues 253–272 (VMILTVFCLSVFALVGLQLF). Residues 273-385 (MGNLRQKCVR…PNYGYTSYDT (113 aa)) lie on the Extracellular side of the membrane. A disulfide bond links C280 and C354. N288, N291, N297, N303, N315, N327, and N356 each carry an N-linked (GlcNAc...) asparagine glycan. Cysteines 363 and 369 form a disulfide. An intramembrane region (pore-forming) is located at residues 386–410 (FSWAFLALFRLMTQDYWENLFQLTL). Over 411–417 (RAAGKTY) the chain is Extracellular. A helical membrane pass occupies residues 418-438 (MIFFVVIIFLGSFYLINLILA). Residues 439 to 572 (VVAMAYAEQN…HIILLIVMDP (134 aa)) lie on the Cytoplasmic side of the membrane. A disordered region spans residues 484 to 522 (ALEGGEEADGDPTHSKDCNGSLDTSGEKGPPRPSCSAES). Residues 554–826 (CCAPWVKFKH…QIAIGRIKWG (273 aa)) form an II repeat. Residues 573–591 (FVDLGITICIVLNTLFMAM) form a helical membrane-spanning segment. Topologically, residues 592-602 (EHYPMTEHFDN) are extracellular. Residues 603 to 622 (VLSVGNLVFTGIFTAEMVLK) traverse the membrane as a helical segment. At 623 to 636 (LIAMDPYEYFQQGW) the chain is on the cytoplasmic side. The helical transmembrane segment at 637–656 (NIFDSFIVTLSLVELGLANV) threads the bilayer. The Extracellular portion of the chain corresponds to 657–658 (QG). Residues 659–676 (LSVLRSFRLLRVFKLAKS) form a helical membrane-spanning segment. Over 677 to 692 (WPTLNMLIKIIGNSVG) the chain is Cytoplasmic. A helical transmembrane segment spans residues 693 to 711 (ALGNLTLVLAIIVFIFAVV). At 712 to 740 (GMQLFGKSYKECVCKIASDCSLPRWHMHD) the chain is on the extracellular side. C725 and C731 are oxidised to a cystine. An intramembrane region (pore-forming) is located at residues 741–761 (FFHSFLIVFRILCGEWIETMW). Residues 762–772 (DCMEVAGQAMC) are Extracellular-facing. Cysteines 763 and 772 form a disulfide. Residues 773-791 (LTVFLMVMVIGNLVVLNLF) traverse the membrane as a helical segment. Residues 792-1026 (LALLLSSFSA…ACFKIVEHNW (235 aa)) are Cytoplasmic-facing. 2 disordered regions span residues 854–896 (EPGG…LTDG) and 925–983 (SDLE…EGEL). Positions 867-887 (EDEKKEPPPEDGNKELKDNHI) are enriched in basic and acidic residues. 2 stretches are compositionally biased toward acidic residues: residues 925–941 (SDLE…FSEP) and 969–983 (EDPE…EGEL). An III repeat occupies 1007-1320 (RGKMWWTLRR…KKYYNAMKKL (314 aa)). The chain crosses the membrane as a helical span at residues 1027-1044 (FETFIVFMILLSSGALAF). At 1045-1057 (EDIYIEQRRVIRT) the chain is on the extracellular side. A helical membrane pass occupies residues 1058–1076 (ILEYADKVFTYIFILEMLL). The Cytoplasmic portion of the chain corresponds to 1077–1090 (KWVAYGFKVYFTNA). The helical transmembrane segment at 1091 to 1109 (WCWLDFLIVDVSIISLVAN) threads the bilayer. Residues 1110–1117 (WLGYSELG) are Extracellular-facing. The helical transmembrane segment at 1118–1136 (PIKSLRTLRALRPLRALSR) threads the bilayer. Residues 1137–1153 (FEGMRVVVNALLGAIPS) lie on the Cytoplasmic side of the membrane. The helical transmembrane segment at 1154–1173 (IMNVLLVCLIFWLIFSIMGV) threads the bilayer. Topologically, residues 1174-1224 (NLFAGKFYYCINTTTSERFDISVVNNKSECESLMYTGQVRWMNVKVNYDNV) are extracellular. A disulfide bond links C1183 and C1203. N-linked (GlcNAc...) asparagine glycosylation is found at N1185 and N1199. Residues 1225-1246 (GLGYLSLLQVATFKGWMDIMYA) constitute an intramembrane region (pore-forming). At 1247-1263 (AVDSREKEEQPDYEVNL) the chain is on the extracellular side. Residues 1264–1285 (YMYLYFVIFIIFGSFFTLNLFI) traverse the membrane as a helical segment. Residues 1286-1348 (GVIIDNFNQQ…MVYDFVTKQV (63 aa)) lie on the Cytoplasmic side of the membrane. The tract at residues 1304–1306 (IFM) is important for rapid channel inactivation. One copy of the IV repeat lies at 1329-1627 (IPRPQNKIQG…WEKFDPDATQ (299 aa)). Residues 1349 to 1366 (FDISIMILICLNMVTMMV) form a helical membrane-spanning segment. Over 1367–1377 (ETDDQSQLKVD) the chain is Extracellular. A helical transmembrane segment spans residues 1378-1396 (ILYNINMVFIIVFTGECVL). Over 1397 to 1408 (KMFALRHYYFTI) the chain is Cytoplasmic. A helical transmembrane segment spans residues 1409 to 1426 (GWNIFDFVVVILSIVGLA). At 1427-1439 (LSDLIQKYFVSPT) the chain is on the extracellular side. Residues 1440-1456 (LFRVIRLARIGRVLRLI) traverse the membrane as a helical segment. Over 1457–1475 (RGAKGIRTLLFALMMSLPA) the chain is Cytoplasmic. A helical transmembrane segment spans residues 1476–1493 (LFNIGLLLFLVMFIYSIF). Residues 1494–1515 (GMSNFAYVKKESGIDDMFNFET) are Extracellular-facing. Positions 1516–1538 (FGNSIICLFEITTSAGWDGLLNP) form an intramembrane region, pore-forming. Topologically, residues 1539 to 1568 (ILNSGPPDCDPTLENPGTNIKGDCGNPSIG) are extracellular. A disulfide bridge links C1547 with C1562. Residues 1569-1591 (ICFFCSYIIISFLIVVNMYIAII) form a helical membrane-spanning segment. The Cytoplasmic portion of the chain corresponds to 1592-1841 (LENFNVATEE…VRPGVKESLV (250 aa)). Positions 1721–1750 (EEVCAIKIQRAYRRHLLQRSVKQASYMYRH) constitute an IQ domain. Residues 1776–1794 (SEKEDNGVQSQGEKEKDST) show a composition bias toward basic and acidic residues. The segment at 1776–1841 (SEKEDNGVQS…VRPGVKESLV (66 aa)) is disordered. The span at 1801 to 1812 (TEVTAPSSSDTA) shows a compositional bias: polar residues. Over residues 1814–1826 (TPPPPSPPPPSSP) the composition is skewed to pro residues.

It belongs to the sodium channel (TC 1.A.1.10) family. Nav1.4/SCN4A subfamily. The Nav1.4 voltage-gated sodium channel consists of an ion-conducting alpha subunit SCN4A which is functional on its own and a regulatory beta subunit SCN1B. SCN1B strongly enhances the presence of SCN4A at the cell surface. SCN1B is also required for rapid channel inactivation and recovery after inactivation. It prevents the decrease of channel activity in response to repetitive, high-frequency depolarizations. Interacts with the syntrophins SNTA1, SNTB1 and SNTB2 (via PDZ domain); probably links SCN4A to the actin cytoskeleton and the extracellular matrix via the dystrophin-associated protein complex and regulates its localization in muscle cells. Interacts with TMEM233; probable regulator of the channel. As to expression, detected in quadriceps muscle (at protein level). Detected in hind-limb skeletal muscles, but not in heart or brain. Detected at low levels in the myocardium. According to Pubme=26427606 detected also in brain.

It is found in the cell membrane. It catalyses the reaction Na(+)(in) = Na(+)(out). With respect to regulation, the channel is inhibited by tetrodotoxin. Functionally, pore-forming subunit of Nav1.4, a voltage-gated sodium (Nav) channel that directly mediates the depolarizing phase of action potentials in excitable membranes. Navs, also called VGSCs (voltage-gated sodium channels) or VDSCs (voltage-dependent sodium channels), operate by switching between closed and open conformations depending on the voltage difference across the membrane. In the open conformation they allow Na(+) ions to selectively pass through the pore, along their electrochemical gradient. The influx of Na+ ions provokes membrane depolarization, initiating the propagation of electrical signals throughout cells and tissues. Highly expressed in skeletal muscles, Nav1.4 generates the action potential crucial for muscle contraction. This chain is Sodium channel protein type 4 subunit alpha, found in Mus musculus (Mouse).